The sequence spans 461 residues: FAD-dependent monooxygenase nodY2 (461 aa).

E48 and R136 together coordinate FAD. The active site involves R214. FAD-binding residues include D338 and G351.

This sequence belongs to the paxM FAD-dependent monooxygenase family. The cofactor is FAD.

The protein operates within secondary metabolite biosynthesis. Its function is as follows. FAD-dependent monooxygenase; part of the gene cluster that mediates the biosynthesis of the indole diterpenes nodulisporic acids (NA). Nodulisporic acid A (NAA) and its chemically modified derivatives are of particular significance because of their highly potent insecticidal activity against blood-feeding arthropods and lack of observable adverse effects on mammals, in particular the tremogenicity associated with the paspaline-derived IDTs is not observed. The geranylgeranyl diphosphate (GGPP) synthase ggs1, localized outside of the cluster, is proposed to catalyze the first step in nodulisporic acid biosynthesis via conversion of farnesyl pyrophosphate and isopentyl pyrophosphate into geranylgeranyl pyrophosphate (GGPP). Condensation of indole-3-glycerol phosphate with GGPP by the prenyl transferase nodC then forms 3-geranylgeranylindole (3-GGI). Epoxidation by the FAD-dependent monooxygenase nodM leads to a single-epoxidized-GGI that is substrate of the terpene cyclase nodB for cyclization to yield emindole SB. The terminal methyl carbon, C28, of emindole SB is then oxidized by the cytochrome P450 monooxygenase nodW to produce nodulisporic acid F (NAF), the pentacyclic core of NAA. NAF is converted to nodulisporic acid E (NAE) via prenylation. This step is probably performed by one of the indole diterpene prenyltransferases nodD1 or nodD2. Several oxidation steps performed by the FAD-linked oxidoreductase nodO and one of the cytochrome P450 monooxygenase nodR, nodX or nodZ further convert NAE to nodulisporic acid D (NAD). NAD is substrate of cytochrome P450 monooxygenase nodJ to produce the precursor of nodulisporic acid C (NAC), converted to NAC by one of the indole diterpene prenyltransferases nodD1 or nodD2. The FAD-dependent monooxygenase nodY2 then oxidizes NAC to nodulisporic acid B (NAB). Finally NAB is converted to NAA by one of the cytochrome P450 monooxygenases nodR, nodX or nodZ. This Hypoxylon pulicicidum protein is FAD-dependent monooxygenase nodY2.